The chain runs to 114 residues: UPF0342 protein LSL_0473 (114 aa).

Belongs to the UPF0342 family.

The chain is UPF0342 protein LSL_0473 from Ligilactobacillus salivarius (strain UCC118) (Lactobacillus salivarius).